We begin with the raw amino-acid sequence, 608 residues long: Phosphogluconate dehydratase (608 aa).

Residues Cys154 and Cys221 each coordinate [4Fe-4S] cluster.

This sequence belongs to the IlvD/Edd family. [4Fe-4S] cluster is required as a cofactor.

It carries out the reaction 6-phospho-D-gluconate = 2-dehydro-3-deoxy-6-phospho-D-gluconate + H2O. It participates in carbohydrate metabolism; Entner-Doudoroff pathway. In terms of biological role, catalyzes the dehydration of 6-phospho-D-gluconate to 2-dehydro-3-deoxy-6-phospho-D-gluconate. The chain is Phosphogluconate dehydratase from Helicobacter pylori (strain J99 / ATCC 700824) (Campylobacter pylori J99).